A 1170-amino-acid chain; its full sequence is Glucose transport transcription regulator RGT1 (1170 aa).

Over residues 1 to 22 (MNELNTVSTNSSDSTKNGGTSN) the composition is skewed to polar residues. Residues 1-46 (MNELNTVSTNSSDSTKNGGTSNSPDDMDSAAAASHAIKKRTKASRA) are disordered. The segment at residues 47–76 (CDQCRKKKIKCDYKDEKGVCSNCQRNGDRC) is a DNA-binding region (zn(2)-C6 fungal-type). The segment at 77 to 149 (SFDRVPLKRG…PSTPSRSNSV (73 aa)) is disordered. Residues 99-108 (RTNEIQDHNN) are compositionally biased toward basic and acidic residues. Residues 113–138 (NTFDNSNNTLNNNTGNSGDNGINSNT) show a composition bias toward low complexity. The span at 139–149 (VPSTPSRSNSV) shows a compositional bias: polar residues. A phosphoserine mark is found at Ser-202, Ser-205, Ser-208, and Ser-229. 5 disordered regions span residues 226–254 (VQQSPITNKHTNDSGNANGSVTGSGSASG), 269–288 (APTDDHNGEQTRRSSSIPSL), 293–323 (SNSLLLGGQPQLPPPQQQSQPQAHQQKLQQG), 384–506 (AQQT…HPMT), and 944–977 (NYRPPNPPANNPTVQEGPSAMGSSPVAGNLSAAP). Low complexity predominate over residues 239-250 (SGNANGSVTGSG). Residues 271 to 280 (TDDHNGEQTR) show a composition bias toward basic and acidic residues. A phosphoserine mark is found at Ser-283 and Ser-284. Low complexity-rich tracts occupy residues 293-302 (SNSLLLGGQP), 309-323 (QQSQPQAHQQKLQQG), and 385-397 (QQTQRPQGQQVPQ). Phosphoserine is present on residues Ser-410 and Ser-414. The segment covering 411–422 (APVSVTLSTDRL) has biased composition (polar residues). Low complexity predominate over residues 424 to 444 (GNENNNGEINNNNGSNNSGSS). The segment covering 445–457 (KDTSQHSQESVTT) has biased composition (polar residues). A compositionally biased stretch (basic residues) spans 473–488 (STKKRRKSYVSKKTKP). Residues 493-506 (SISITSKDSAHPMT) are compositionally biased toward polar residues. Position 1130 is a phosphoserine (Ser-1130).

The protein belongs to the EDS1/RGT1 family. Post-translationally, glucose-induced phosphorylation regulates the DNA-binding activity. Hyperphosphorylation in cells growing on high levels of glucose does prevents DNA-binding and dephosphorylation restores DNA-binding ability.

Its subcellular location is the nucleus. The protein resides in the cytoplasm. In terms of biological role, glucose-responsive transcription factor that regulates expression of several glucose transporter (HXT) genes in response to glucose. In the absence of glucose, it functions as a transcriptional repressor, whereas high concentrations of glucose cause it to function as a transcriptional activator. In cells growing on low levels of glucose, has a neutral role, neither repressing nor activating transcription. Binds the consensus binding site sequence 5'-CGGANNA-3', of which multiple copies are present in all HXT promoters regulated by RGT1. The sequence is that of Glucose transport transcription regulator RGT1 (RGT1) from Saccharomyces cerevisiae (strain RM11-1a) (Baker's yeast).